Here is a 337-residue protein sequence, read N- to C-terminus: Large ribosomal subunit protein uL3 (337 aa).

The tract at residues 1-26 (MTRHHQPRKGSVAFSPRKRVARETPR) is disordered.

The protein belongs to the universal ribosomal protein uL3 family. Part of the 50S ribosomal subunit. Forms a cluster with proteins L14 and L24e.

Functionally, one of the primary rRNA binding proteins, it binds directly near the 3'-end of the 23S rRNA, where it nucleates assembly of the 50S subunit. The chain is Large ribosomal subunit protein uL3 from Methanosphaera stadtmanae (strain ATCC 43021 / DSM 3091 / JCM 11832 / MCB-3).